Reading from the N-terminus, the 257-residue chain is Imidazole glycerol phosphate synthase subunit HisF (257 aa).

Residues Asp12 and Asp131 contribute to the active site.

This sequence belongs to the HisA/HisF family. Heterodimer of HisH and HisF.

The protein localises to the cytoplasm. The catalysed reaction is 5-[(5-phospho-1-deoxy-D-ribulos-1-ylimino)methylamino]-1-(5-phospho-beta-D-ribosyl)imidazole-4-carboxamide + L-glutamine = D-erythro-1-(imidazol-4-yl)glycerol 3-phosphate + 5-amino-1-(5-phospho-beta-D-ribosyl)imidazole-4-carboxamide + L-glutamate + H(+). It participates in amino-acid biosynthesis; L-histidine biosynthesis; L-histidine from 5-phospho-alpha-D-ribose 1-diphosphate: step 5/9. In terms of biological role, IGPS catalyzes the conversion of PRFAR and glutamine to IGP, AICAR and glutamate. The HisF subunit catalyzes the cyclization activity that produces IGP and AICAR from PRFAR using the ammonia provided by the HisH subunit. This Paraburkholderia phymatum (strain DSM 17167 / CIP 108236 / LMG 21445 / STM815) (Burkholderia phymatum) protein is Imidazole glycerol phosphate synthase subunit HisF.